A 553-amino-acid polypeptide reads, in one-letter code: Urocanate hydratase (553 aa).

Residues 45-46, Q123, 169-171, D189, R194, 235-236, 256-260, 266-267, Y315, and G485 contribute to the NAD(+) site; these read GG, GMG, NA, QTSAH, and YV.

Belongs to the urocanase family. NAD(+) is required as a cofactor.

It localises to the cytoplasm. The catalysed reaction is 4-imidazolone-5-propanoate = trans-urocanate + H2O. The protein operates within amino-acid degradation; L-histidine degradation into L-glutamate; N-formimidoyl-L-glutamate from L-histidine: step 2/3. In terms of biological role, catalyzes the conversion of urocanate to 4-imidazolone-5-propionate. The polypeptide is Urocanate hydratase (Staphylococcus aureus (strain COL)).